Consider the following 284-residue polypeptide: Putative ABC transporter ATP-binding protein PH1815 (284 aa).

The ABC transporter domain occupies 4–244 (IEVEDVSFRY…VEFLRTIGVK (241 aa)). 38–45 (GPSGSGKS) lines the ATP pocket.

The protein belongs to the ABC transporter superfamily.

It localises to the cell membrane. Functionally, probably part of an ABC transporter complex. Responsible for energy coupling to the transport system. The polypeptide is Putative ABC transporter ATP-binding protein PH1815 (Pyrococcus horikoshii (strain ATCC 700860 / DSM 12428 / JCM 9974 / NBRC 100139 / OT-3)).